A 317-amino-acid polypeptide reads, in one-letter code: Melanoma-associated antigen 4 (317 aa).

Basic and acidic residues predominate over residues 1–14 (MSSEQKSQHCKPEE). The segment at 1–102 (MSSEQKSQHC…EEGPSTSPDA (102 aa)) is disordered. Positions 66–82 (PQGASALPTTISFTCWR) are enriched in polar residues. Residues 110–309 (LSNKVDELAH…IAYPSLREAA (200 aa)) form the MAGE domain.

As to expression, expressed in many tumors of several types, such as melanoma, head and neck squamous cell carcinoma, lung carcinoma and breast carcinoma, but not in normal tissues except for testes and placenta.

Functionally, regulates cell proliferation through the inhibition of cell cycle arrest at the G1 phase. Also negatively regulates p53-mediated apoptosis. The chain is Melanoma-associated antigen 4 (MAGEA4) from Homo sapiens (Human).